The sequence spans 701 residues: Elongation factor G (701 aa).

The tr-type G domain maps to 8 to 291 (SRYRNIGIVA…AVIDFLPAPT (284 aa)). Residues 17-24 (AHVDAGKT), 89-93 (DTPGH), and 143-146 (NKMD) each bind GTP.

This sequence belongs to the TRAFAC class translation factor GTPase superfamily. Classic translation factor GTPase family. EF-G/EF-2 subfamily.

It is found in the cytoplasm. In terms of biological role, catalyzes the GTP-dependent ribosomal translocation step during translation elongation. During this step, the ribosome changes from the pre-translocational (PRE) to the post-translocational (POST) state as the newly formed A-site-bound peptidyl-tRNA and P-site-bound deacylated tRNA move to the P and E sites, respectively. Catalyzes the coordinated movement of the two tRNA molecules, the mRNA and conformational changes in the ribosome. The polypeptide is Elongation factor G (Pseudomonas fluorescens (strain Pf0-1)).